The sequence spans 349 residues: Leucine-rich repeat-containing protein 58 (349 aa).

10 LRR repeats span residues 14–34, 35–56, 58–80, 81–102, 105–125, 128–149, 151–173, 174–195, 197–217, and 219–239; these read NLTHLGLENLNLELVSENKRK, DVQQLLLPHNRLVVLPPHVNSF, HLHLLDISNNNMAYIGEEILGLT, KLKTLLAKNNRLDEFSFPKELG, RLEVLNLSGNRFEEIPDQFLQ, TLKSLSLGGNRLKSIPAEIENL, SLEFLYLGGNFISSIPPELANLP, YLSYLVLCDNRIQSVPPQLAQV, SLRSLSLHNLLTYLPREILSL, and QLQELSLRGNPLVVRFVRDLT.

The protein is Leucine-rich repeat-containing protein 58 (lrrc58) of Xenopus tropicalis (Western clawed frog).